A 265-amino-acid polypeptide reads, in one-letter code: MNTYKPYSERAKQHSNACARSLLELMERKQTNLSVAVDVTTKKELISIADAIGPYICVLKTHIDIVEDFDADLIQQLQELAKKHDFLFFEDRKFADIGNTVKHQYANGIYKIASWSHITNAHTVPGEGIIKGLAEVGLPLGRGLLLLAEMSSKGALTKGSYTTDSVEMARRNKDFVFGFIAQNKMNQYDDEDFIVMSPGVGLDVKGDGLGQQYRTPREVIVESGADVIIVGRGIYGQPDKLVEQAQRYRQAGWDAYLERLALHNK.

Residues aspartate 38, 60–62 (KTH), 91–100 (DRKFADIGNT), tyrosine 213, and arginine 232 contribute to the substrate site. The active-site Proton donor is the lysine 93.

The protein belongs to the OMP decarboxylase family.

The catalysed reaction is orotidine 5'-phosphate + H(+) = UMP + CO2. Its pathway is pyrimidine metabolism; UMP biosynthesis via de novo pathway; UMP from orotate: step 2/2. This Rhizopus oryzae (Mucormycosis agent) protein is Orotidine 5'-phosphate decarboxylase (pyrG).